The chain runs to 211 residues: Degradation in the endoplasmic reticulum protein 1 (211 aa).

Methionine 1 carries the post-translational modification N-acetylmethionine. Residues methionine 1–leucine 14 are Cytoplasmic-facing. Residues valine 15 to leucine 32 form a helical membrane-spanning segment. Residues arginine 33 to asparagine 67 are Lumenal-facing. A helical transmembrane segment spans residues tryptophan 68–glutamate 85. Over asparagine 86–arginine 92 the chain is Cytoplasmic. A helical membrane pass occupies residues lysine 93–threonine 109. Over serine 110 to serine 117 the chain is Lumenal. The chain crosses the membrane as a helical span at residues leucine 118 to lysine 133. Topologically, residues asparagine 134–serine 149 are cytoplasmic. A helical membrane pass occupies residues proline 150 to tyrosine 165. The Lumenal portion of the chain corresponds to lysine 166–serine 168. The helical transmembrane segment at tryptophan 169–isoleucine 189 threads the bilayer. Topologically, residues glycine 190 to proline 211 are cytoplasmic.

Belongs to the derlin family. Component of the HRD1 ubiquitin ligase complex which contains the E3 ligase HRD1, its cofactors HRD3, USA1 and DER1, substrate recruiting factor YOS9 and CDC48-binding protein UBX2. Within the complex, interacts with USA1 (via C-terminus). In ERAD-L, HRD3 and YOS9 jointly bind misfolded glycoproteins in the endoplasmic reticulum (ER) lumen. Movement of ERAD-L substrates through the ER membrane is facilitated by HRD1 and DER1 which have lateral gates facing each other and which distort the membrane region between the lateral gates, making it much thinner than a normal phospholipid bilayer. Substrates insert into the membrane as a hairpin loop with one strand interacting with DER1 and the other with HRD1. The HRD1 complex interacts with the heterotrimeric CDC48-NPL4-UFD1 ATPase complex which is recruited by UBX2 via its interaction with CDC48 and which moves ubiquitinated substrates to the cytosol for targeting to the proteasome. N-terminally acetylated by acetyltransferase NatB which enhances DER1 stability and is required for ERAD-L function.

The protein localises to the endoplasmic reticulum membrane. Its function is as follows. Component of the endoplasmic reticulum-associated degradation (ERAD) pathway. Specifically required for the ERAD-L pathway which mediates the degradation of proteins with misfolded lumenal domains within the endoplasmic reticulum (ER). Facilitates retrotranslocation of misfolded proteins from the ER lumen through the ER membrane in conjunction with HRD1. Both proteins have lateral gates facing each other and distort the membrane region between the lateral gates, making it much thinner than a normal phospholipid bilayer. Substrates insert into the membrane as a hairpin loop with one strand interacting with DER1 and the other with HRD1. This Saccharomyces cerevisiae (strain ATCC 204508 / S288c) (Baker's yeast) protein is Degradation in the endoplasmic reticulum protein 1 (DER1).